The following is a 932-amino-acid chain: Protocadherin gamma-A3 (932 aa).

The N-terminal stretch at 1–29 is a signal peptide; that stretch reads MTNCLSFRNGRGLALLCALLGTLCETGSG. Cadherin domains follow at residues 30–133, 134–242, 243–347, 348–452, 453–562, and 570–682; these read QIRY…APNF, PTEE…PPMF, TQPE…APEI, TITS…PPTF, PHLS…APEI, and DGST…EPSA. Topologically, residues 30 to 692 are extracellular; the sequence is QIRYSVSEEL…KPNDSDLTLY (663 aa). Residues Asn265, Asn419, and Asn545 are each glycosylated (N-linked (GlcNAc...) asparagine). An N-linked (GlcNAc...) asparagine glycan is attached at Asn685. A helical membrane pass occupies residues 693 to 713; the sequence is LVVAVAAVSCVFLALVIVLLA. Topologically, residues 714–932 are cytoplasmic; the sequence is HRLRRWHKSR…KKKSGKKEKK (219 aa). Disordered regions lie at residues 806-841 and 902-932; these read LLQQ…WPNN and ATLT…KEKK. Residues 922-932 are compositionally biased toward basic residues; it reads NKKKSGKKEKK.

The protein localises to the cell membrane. Potential calcium-dependent cell-adhesion protein. May be involved in the establishment and maintenance of specific neuronal connections in the brain. The protein is Protocadherin gamma-A3 (PCDHGA3) of Pan troglodytes (Chimpanzee).